The primary structure comprises 1419 residues: MGKEQKEKKDGNLSIKEEVEKELNKKSTAELFRKIKNEKISFFLPFKCLPAQHRKLLFISFVCAVLSGGTLPFFISVFGVILKNMNLGDDINPIILSLVSIGLVQFILSMISSYCMDVITSKILKTLKLEYLRSVFYQDGQFHDNNPGSKLRSDLDFYLEQVSSGIGTKFITIFTYASSFLGLYIWSLIKNARLTLCITCVFPLIYVCGVICNKKVKLNKKTSLLYNNNTMSIIEEALMGIRTVASYCGEKTILNKFNLSETFYSKYILKANFVEALHIGLINGLILVSYAFGFWYGTRIIINSATNQYPNNDFNGASVISILLGVLISMFMLTIILPNITEYMKALEATNSLYEIINRKPLVENNDDGETLPNIKKIEFKNVRFHYDTRKDVEIYKDLSFTLKEGKTYAFVGESGCGKSTILKLIERLYDPTEGDIIVNDSHNLKDINLKWWRSKIGVVSQDPLLFSNSIKNNIKYSLYSLKDLEAMENYYEENTNDTYENKNFSLISNSMTSNELLEMKKEYQTIKDSDVVDVSKKVLIHDFVSSLPDKYDTLVGSNASKLSGGQKQRISIARAIMRNPKILILDEATSSLDNKSEYLVQKTINNLKGNENRITIIIAHRLSTIRYANTIFVLSNRERSDNNNNNNNDDNNNNNNNNNNKINNEGSYIIEQGTHDSLMKNKNGIYHLMINNQKISSNKSSNNGNDNGSDNKSSAYKDSDTGNDADNMNSLSIHENENISNNRNCKNTAENEKEEKVPFFKRMFRRKKKAPNNLRIIYKEIFSYKKDVTIIFFSILVAGGLYPVFALLYARYVSTLFDFANLEYNSNKYSIYILLIAIAMFISETLKNYYNNKIGEKVEKTMKRRLFENILYQEMSFFDQDKNTPGVLSAHINRDVHLLKTGLVNNIVIFSHFIMLFLVSMVMSFYFCPIVAAVLTFIYFINMRVFAVRARLTKSKEIEKKENMSSGVFAFSSDDEMFKDPSFLIQEAFYNMHTVINYGLEDYFCNLIEKAIDYKNKGQKRRIIVNAALWGFSQSAQLFINSFAYWFGSFLIKRGTILVDDFMKSLFTFIFTGSYAGKLMSLKGDSENAKLSFEKYYPLMIRKSNIDVRDDGGIRINKNLIKGKVDIKDVNFRYISRPNVPIYKNLSFTCDSKKTTAIVGETGSGKSTFMNLLLRFYDLKNDHIILKNDMTNFQDYQNNNNNSLVLKNVNEFSNQSGSAEDYTVFNNNGEILLDDINICDYNLRDLRNLFSIVSQEPMLFNMSIYENIKFGREDATLEDVKRVSKFAAIDEFIESLPNKYDTNVGPYGKSLSGGQKQRIAIARALLREPKILLLDEATSSLDSNSEKLIEKTIVDIKDKADKTIITIAHRIASIKRSDKIVVFNNPDRNGTFVQSHGTHDELLSAQDGIYKKYVKLAK.

The r domain; regulates transporter activity stretch occupies residues 1-37 (MGKEQKEKKDGNLSIKEEVEKELNKKSTAELFRKIKN). Topologically, residues 1-60 (MGKEQKEKKDGNLSIKEEVEKELNKKSTAELFRKIKNEKISFFLPFKCLPAQHRKLLFIS) are cytoplasmic. An ABC transmembrane type-1 1 domain is found at 58 to 345 (FISFVCAVLS…ILPNITEYMK (288 aa)). A helical membrane pass occupies residues 61-81 (FVCAVLSGGTLPFFISVFGVI). Residues 82–90 (LKNMNLGDD) lie on the Vacuolar side of the membrane. The chain crosses the membrane as a helical span at residues 91–111 (INPIILSLVSIGLVQFILSMI). Residues 112-168 (SSYCMDVITSKILKTLKLEYLRSVFYQDGQFHDNNPGSKLRSDLDFYLEQVSSGIGT) are Cytoplasmic-facing. Residues 169 to 189 (KFITIFTYASSFLGLYIWSLI) form a helical membrane-spanning segment. The Vacuolar segment spans residues 190–191 (KN). A helical membrane pass occupies residues 192 to 212 (ARLTLCITCVFPLIYVCGVIC). At 213–275 (NKKVKLNKKT…KYILKANFVE (63 aa)) the chain is on the cytoplasmic side. The helical transmembrane segment at 276–296 (ALHIGLINGLILVSYAFGFWY) threads the bilayer. The Vacuolar segment spans residues 297-316 (GTRIIINSATNQYPNNDFNG). The helical transmembrane segment at 317–337 (ASVISILLGVLISMFMLTIIL) threads the bilayer. Over 338–788 (PNITEYMKAL…YKEIFSYKKD (451 aa)) the chain is Cytoplasmic. The region spanning 378–662 (IEFKNVRFHY…NNNNNNNNNK (285 aa)) is the ABC transporter 1 domain. Residues Y387, T389, R390, S415, C417, G418, K419, S420, T421, Q462, K562, S564, G566, and Q567 each coordinate ATP. Q462 is a binding site for Mg(2+). 2 disordered regions span residues 639-665 (ERSD…KINN) and 697-752 (SSNK…TAEN). Composition is skewed to low complexity over residues 643-665 (NNNN…KINN) and 697-715 (SSNK…NKSS). The segment covering 723-749 (GNDADNMNSLSIHENENISNNRNCKNT) has biased composition (polar residues). Residues 789 to 809 (VTIIFFSILVAGGLYPVFALL) traverse the membrane as a helical segment. The ABC transmembrane type-1 2 domain occupies 791 to 1083 (IIFFSILVAG…GSYAGKLMSL (293 aa)). The Vacuolar segment spans residues 810 to 829 (YARYVSTLFDFANLEYNSNK). Residues 830-850 (YSIYILLIAIAMFISETLKNY) traverse the membrane as a helical segment. Residues 851–907 (YNNKIGEKVEKTMKRRLFENILYQEMSFFDQDKNTPGVLSAHINRDVHLLKTGLVNN) lie on the Cytoplasmic side of the membrane. Transmembrane regions (helical) follow at residues 908 to 928 (IVIF…SFYF) and 929 to 949 (CPIV…VFAV). Residues 950-1032 (RARLTKSKEI…RIIVNAALWG (83 aa)) are Cytoplasmic-facing. A helical membrane pass occupies residues 1033 to 1053 (FSQSAQLFINSFAYWFGSFLI). Residues 1054 to 1057 (KRGT) are Vacuolar-facing. A helical membrane pass occupies residues 1058–1078 (ILVDDFMKSLFTFIFTGSYAG). Over 1079–1419 (KLMSLKGDSE…IYKKYVKLAK (341 aa)) the chain is Cytoplasmic. Residues 1126 to 1416 (VDIKDVNFRY…QDGIYKKYVK (291 aa)) form the ABC transporter 2 domain. The ATP site is built by Y1135, R1138, T1163, G1164, G1166, K1167, S1168, T1169, Q1256, L1312, S1313, G1315, and Q1316. S1168 is a Mg(2+) binding site. Q1256 lines the Mg(2+) pocket.

The protein belongs to the ABC transporter superfamily. ABCB family. Multidrug resistance exporter (TC 3.A.1.201) subfamily.

The protein resides in the vacuole membrane. It catalyses the reaction ATP + H2O + xenobioticSide 1 = ADP + phosphate + xenobioticSide 2.. Functionally, energy-dependent efflux pump responsible for decreased drug accumulation in multidrug-resistant cells. Transports lumefantrine, mefloquine, chloroquine, quinine, quinidine, amodiaquine, piperaquine, dihydroartemisinin and quinacrine. The protein is Multidrug resistance protein 1 of Plasmodium falciparum (isolate 3D7).